A 242-amino-acid chain; its full sequence is Universal stress protein PHOS32 (242 aa).

A chloroplast-targeting transit peptide spans 1 to 43 (MNPADSDHPQLPNIKIHHPPSPRHSHHHHSSSTPSSAATPTPT). Residues 1–45 (MNPADSDHPQLPNIKIHHPPSPRHSHHHHSSSTPSSAATPTPTAG) form a disordered region. Residues 15-30 (KIHHPPSPRHSHHHHS) show a composition bias toward basic residues. Pro-19 serves as a coordination point for ATP. A Phosphoserine; by MAPK3 and MAPK6 modification is found at Ser-21. Residues 31–44 (SSTPSSAATPTPTA) show a composition bias toward low complexity. Residues Val-83, 168 to 178 (GSRGFGAEKKR), and 186 to 188 (SVS) contribute to the ATP site. Ser-219 carries the post-translational modification Phosphoserine.

The protein belongs to the universal stress protein A family. Post-translationally, phosphorylated by MAPK3 and MAPK6 after pathogenic elicitation (e.g. bacterial flg22, Phytophthora infestans zoospores and xylanase).

The protein resides in the plastid. Its subcellular location is the chloroplast. The chain is Universal stress protein PHOS32 from Arabidopsis thaliana (Mouse-ear cress).